Reading from the N-terminus, the 68-residue chain is Guanine nucleotide-binding protein G(I)/G(S)/G(O) subunit gamma-10 (68 aa).

An N-acetylserine modification is found at Ser2. At Cys65 the chain carries Cysteine methyl ester. Cys65 is lipidated: S-geranylgeranyl cysteine. Positions Ala66 to Leu68 are cleaved as a propeptide — removed in mature form.

This sequence belongs to the G protein gamma family. As to quaternary structure, g proteins are composed of 3 units, alpha, beta and gamma. Abundantly and ubiquitously expressed.

The protein resides in the cell membrane. Guanine nucleotide-binding proteins (G proteins) are involved as a modulator or transducer in various transmembrane signaling systems. The beta and gamma chains are required for the GTPase activity, for replacement of GDP by GTP, and for G protein-effector interaction. Interacts with beta-1 and beta-2, but not with beta-3. This is Guanine nucleotide-binding protein G(I)/G(S)/G(O) subunit gamma-10 (GNG10) from Homo sapiens (Human).